The chain runs to 152 residues: Small ribosomal subunit protein uS8m (152 aa).

It belongs to the universal ribosomal protein uS8 family.

Its subcellular location is the mitochondrion. This chain is Small ribosomal subunit protein uS8m (RPS8), found in Marchantia polymorpha (Common liverwort).